The primary structure comprises 474 residues: Glutamate--tRNA ligase (474 aa).

Residues 11-21 (PSPTGFLHIGG) carry the 'HIGH' region motif. The 'KMSKS' region motif lies at 240-244 (KLSKR). Residue lysine 243 participates in ATP binding.

Belongs to the class-I aminoacyl-tRNA synthetase family. Glutamate--tRNA ligase type 1 subfamily. In terms of assembly, monomer.

Its subcellular location is the cytoplasm. The enzyme catalyses tRNA(Glu) + L-glutamate + ATP = L-glutamyl-tRNA(Glu) + AMP + diphosphate. Catalyzes the attachment of glutamate to tRNA(Glu) in a two-step reaction: glutamate is first activated by ATP to form Glu-AMP and then transferred to the acceptor end of tRNA(Glu). The polypeptide is Glutamate--tRNA ligase (Bradyrhizobium sp. (strain BTAi1 / ATCC BAA-1182)).